Consider the following 326-residue polypeptide: tRNA-modifying protein YgfZ (326 aa).

2 residues coordinate folate: Trp27 and Trp189.

It belongs to the tRNA-modifying YgfZ family.

It localises to the cytoplasm. Functionally, folate-binding protein involved in regulating the level of ATP-DnaA and in the modification of some tRNAs. It is probably a key factor in regulatory networks that act via tRNA modification, such as initiation of chromosomal replication. The protein is tRNA-modifying protein YgfZ of Shigella boydii serotype 4 (strain Sb227).